The chain runs to 883 residues: Alanine--tRNA ligase (883 aa).

Zn(2+)-binding residues include H570, H574, C672, and H676.

Belongs to the class-II aminoacyl-tRNA synthetase family. It depends on Zn(2+) as a cofactor.

Its subcellular location is the cytoplasm. The enzyme catalyses tRNA(Ala) + L-alanine + ATP = L-alanyl-tRNA(Ala) + AMP + diphosphate. Catalyzes the attachment of alanine to tRNA(Ala) in a two-step reaction: alanine is first activated by ATP to form Ala-AMP and then transferred to the acceptor end of tRNA(Ala). Also edits incorrectly charged Ser-tRNA(Ala) and Gly-tRNA(Ala) via its editing domain. The polypeptide is Alanine--tRNA ligase (Heliobacterium modesticaldum (strain ATCC 51547 / Ice1)).